The following is a 122-amino-acid chain: MARIAGVNIPTNKRVLIALQYIHGIGQKNAADIIEKVKIPVDRRVNQLSDAEVLQIREVIDRDYLVEGDLRRETGMNIKRLMDLGCYRGLRHRRGLPVRGQRTHTNARTRKGPAKAIAGKKK.

The interval 99-122 (RGQRTHTNARTRKGPAKAIAGKKK) is disordered.

Belongs to the universal ribosomal protein uS13 family. As to quaternary structure, part of the 30S ribosomal subunit. Forms a loose heterodimer with protein S19. Forms two bridges to the 50S subunit in the 70S ribosome.

Its function is as follows. Located at the top of the head of the 30S subunit, it contacts several helices of the 16S rRNA. In the 70S ribosome it contacts the 23S rRNA (bridge B1a) and protein L5 of the 50S subunit (bridge B1b), connecting the 2 subunits; these bridges are implicated in subunit movement. Contacts the tRNAs in the A and P-sites. In Rhodopseudomonas palustris (strain BisB5), this protein is Small ribosomal subunit protein uS13.